We begin with the raw amino-acid sequence, 179 residues long: RNA polymerase sigma-E factor (179 aa).

Residues 36 to 49 carry the Polymerase core binding motif; the sequence is DLLQTALVRTYGRW. Positions 130 to 149 form a DNA-binding region, H-T-H motif; the sequence is TEETAAALGMSAGTVKSTLH.

It belongs to the sigma-70 factor family. ECF subfamily.

The protein localises to the cytoplasm. Functionally, sigma factors are initiation factors that promote the attachment of RNA polymerase to specific initiation sites and are then released. This sigma factor is required for normal cell wall integrity; it is recruited by RNA polymerase to transcribe genes with cell wall-related functions. The sequence is that of RNA polymerase sigma-E factor (sigE) from Streptomyces avermitilis (strain ATCC 31267 / DSM 46492 / JCM 5070 / NBRC 14893 / NCIMB 12804 / NRRL 8165 / MA-4680).